The chain runs to 414 residues: Serpin A3-6 (414 aa).

The signal sequence occupies residues 1-25 (MRTERVSPLLALGILVAGLCSRVHC). Asparagine 103, asparagine 183, asparagine 233, asparagine 267, and asparagine 321 each carry an N-linked (GlcNAc...) asparagine glycan.

Belongs to the serpin family. Homodimer.

Its subcellular location is the cytoplasmic vesicle. The protein resides in the secretory vesicle. It localises to the chromaffin granule. It is found in the secreted. Functionally, serine protease inhibitor. This Bos taurus (Bovine) protein is Serpin A3-6.